The sequence spans 175 residues: Photosynthetic NDH subunit of subcomplex B 4, chloroplastic (175 aa).

The transit peptide at 1–24 directs the protein to the chloroplast; sequence MAEAFTSFTFTNLHIPSSYNHSPK. Residues 95–111 traverse the membrane as a helical segment; that stretch reads VYMFYIMFTCWGCLYFG.

As to quaternary structure, part of the chloroplast NDH complex, composed of a mixture of chloroplast and nucleus encoded subunits. Component of the NDH subcomplex B, at least composed of PnsB1, PnsB2, PnsB3, PnsB4 and PnsB5.

The protein resides in the plastid. It is found in the chloroplast thylakoid membrane. NDH shuttles electrons from NAD(P)H:plastoquinone, via FMN and iron-sulfur (Fe-S) centers, to quinones in the photosynthetic chain and possibly in a chloroplast respiratory chain. The immediate electron acceptor for the enzyme in this species is believed to be plastoquinone. Couples the redox reaction to proton translocation, and thus conserves the redox energy in a proton gradient. The polypeptide is Photosynthetic NDH subunit of subcomplex B 4, chloroplastic (Arabidopsis thaliana (Mouse-ear cress)).